The primary structure comprises 507 residues: Probable cytosol aminopeptidase (507 aa).

The Mn(2+) site is built by lysine 254 and aspartate 259. Residue lysine 266 is part of the active site. Positions 277, 336, and 338 each coordinate Mn(2+). Arginine 340 is an active-site residue. The segment at 486–507 (PRKAQPKARSAKRSKPVSRTRA) is disordered. The span at 489–507 (AQPKARSAKRSKPVSRTRA) shows a compositional bias: basic residues.

It belongs to the peptidase M17 family. The cofactor is Mn(2+).

The protein localises to the cytoplasm. It catalyses the reaction Release of an N-terminal amino acid, Xaa-|-Yaa-, in which Xaa is preferably Leu, but may be other amino acids including Pro although not Arg or Lys, and Yaa may be Pro. Amino acid amides and methyl esters are also readily hydrolyzed, but rates on arylamides are exceedingly low.. It carries out the reaction Release of an N-terminal amino acid, preferentially leucine, but not glutamic or aspartic acids.. Its function is as follows. Presumably involved in the processing and regular turnover of intracellular proteins. Catalyzes the removal of unsubstituted N-terminal amino acids from various peptides. This chain is Probable cytosol aminopeptidase, found in Polaromonas sp. (strain JS666 / ATCC BAA-500).